The following is a 378-amino-acid chain: 4-hydroxy-3-methylbut-2-en-1-yl diphosphate synthase (flavodoxin) (378 aa).

Cys-268, Cys-271, Cys-303, and Glu-310 together coordinate [4Fe-4S] cluster. The segment at 359-378 is disordered; the sequence is AEREKEKEKEKEKEKETQEQ.

The protein belongs to the IspG family. The cofactor is [4Fe-4S] cluster.

The enzyme catalyses (2E)-4-hydroxy-3-methylbut-2-enyl diphosphate + oxidized [flavodoxin] + H2O + 2 H(+) = 2-C-methyl-D-erythritol 2,4-cyclic diphosphate + reduced [flavodoxin]. It participates in isoprenoid biosynthesis; isopentenyl diphosphate biosynthesis via DXP pathway; isopentenyl diphosphate from 1-deoxy-D-xylulose 5-phosphate: step 5/6. Converts 2C-methyl-D-erythritol 2,4-cyclodiphosphate (ME-2,4cPP) into 1-hydroxy-2-methyl-2-(E)-butenyl 4-diphosphate. The chain is 4-hydroxy-3-methylbut-2-en-1-yl diphosphate synthase (flavodoxin) from Bacillus cereus (strain ZK / E33L).